The sequence spans 1203 residues: DNA-directed RNA polymerase I subunit RPA135 (1203 aa).

S2 is modified (N-acetylserine). A Phosphoserine modification is found at S81. The segment at 1104–1131 adopts a C4-type zinc-finger fold; that stretch reads CRECGSILTTQQSVPRIGSISTVCCRRC. S1156 carries the post-translational modification Phosphoserine.

This sequence belongs to the RNA polymerase beta chain family. In terms of assembly, component of the RNA polymerase I (Pol I) complex consisting of 14 subunits: RPA135, RPA190, RPC40, RPA14, RPB5, RPO26, RPA43, RPB8, RPA12, RPB10, RPC19, RPC10, RPA49 and RPA34. The complex is composed of a horseshoe-shaped core containing ten subunits (RPA135, RPA190, RPB5, RPO26, RPB8, RPB10, RPC10, RPA12, RPC19 and RPC40) where RPA135 and RPA190 form the DNA-binding cleft. Outside of the core, RPA14 and RPA43 form the stalk that mediates interactions with transcription initiation factors and newly synthesized RNA.

Its subcellular location is the nucleus. It localises to the nucleolus. It catalyses the reaction RNA(n) + a ribonucleoside 5'-triphosphate = RNA(n+1) + diphosphate. In terms of biological role, DNA-dependent RNA polymerases catalyze the transcription of DNA into RNA using the four ribonucleoside triphosphates as substrates. Component of RNA polymerase I (Pol I) which synthesizes ribosomal RNA precursors. Besides, RNA polymerase I has intrinsic RNA cleavage activity. RPA190 and RPA135 both contribute to the polymerase catalytic activity and together form the Pol I active center. In addition, subunit RPA12 contributes a catalytic zinc ribbon that is required for RNA cleavage by Pol I. A single stranded DNA template strand of the promoter is positioned within the central active site cleft of Pol I. A bridging helix emanates from RPA190 and crosses the cleft near the catalytic site and is thought to promote translocation of Pol I by acting as a ratchet that moves the RNA-DNA hybrid through the active site by switching from straight to bent conformations at each step of nucleotide addition. This chain is DNA-directed RNA polymerase I subunit RPA135 (RPA135), found in Saccharomyces cerevisiae (strain ATCC 204508 / S288c) (Baker's yeast).